The sequence spans 217 residues: 3,4-dihydroxy-2-butanone 4-phosphate synthase (217 aa).

D-ribulose 5-phosphate contacts are provided by residues 37–38 (RE), aspartate 42, 150–154 (RRGHT), and glutamate 174. Glutamate 38 contacts Mg(2+). Histidine 153 contacts Mg(2+).

Belongs to the DHBP synthase family. In terms of assembly, homodimer. Mg(2+) is required as a cofactor. It depends on Mn(2+) as a cofactor.

It carries out the reaction D-ribulose 5-phosphate = (2S)-2-hydroxy-3-oxobutyl phosphate + formate + H(+). The protein operates within cofactor biosynthesis; riboflavin biosynthesis; 2-hydroxy-3-oxobutyl phosphate from D-ribulose 5-phosphate: step 1/1. In terms of biological role, catalyzes the conversion of D-ribulose 5-phosphate to formate and 3,4-dihydroxy-2-butanone 4-phosphate. This chain is 3,4-dihydroxy-2-butanone 4-phosphate synthase, found in Aeromonas salmonicida (strain A449).